Here is a 71-residue protein sequence, read N- to C-terminus: Small ribosomal subunit protein bS21 (71 aa).

Residues 40–71 (KPTQVRKRKQAAAVKRHMKRLNREQQRRQRPY) form a disordered region. A compositionally biased stretch (basic residues) spans 43-59 (QVRKRKQAAAVKRHMKR). The span at 60–71 (LNREQQRRQRPY) shows a compositional bias: basic and acidic residues.

Belongs to the bacterial ribosomal protein bS21 family.

In Halorhodospira halophila (strain DSM 244 / SL1) (Ectothiorhodospira halophila (strain DSM 244 / SL1)), this protein is Small ribosomal subunit protein bS21.